Reading from the N-terminus, the 783-residue chain is Protein SCARECROW (783 aa).

Residues 298-387 are disordered; it reads QPQSQDAITH…QSPPASENTA (90 aa). Low complexity-rich tracts occupy residues 342–353 and 372–384; these read PSSLPFVPVPSS and ESQS…PASE. The stretch at 387-418 forms a coiled coil; the sequence is AAAALIRTESIMRREKEELEQQKKDEEGLHLL. In terms of domain architecture, GRAS spans 408–777; it reads QKKDEEGLHL…LCLLTASAWR (370 aa). The tract at residues 415–478 is leucine repeat I (LRI); that stretch reads LHLLTLLLQC…LVNSCLGIYA (64 aa). The short motif at 422–426 is the LxCxE motif element; that stretch reads LQCAE. The interval 497 to 562 is VHIID; that stretch reads FQVFNGISPF…GGPPLVRLTG (66 aa). The VHIID signature appears at 528-532; the sequence is VHIID. The interval 572–604 is leucine repeat II (LRII); sequence ATGKRLSDFAQKLGLPFEFFPVADKVGNLDPQR. Residues 613–700 are PFYRE; that stretch reads VAVHWLQHSL…QQLLSREIRN (88 aa). The segment at 703-777 is SAW; sequence AVGGPSRSGE…LCLLTASAWR (75 aa).

This sequence belongs to the GRAS family.

It is found in the nucleus. Its function is as follows. Putative transcription factor involved in asymmetric cell division. Required for differentiation of endodermis and graviresponses. The polypeptide is Protein SCARECROW (SCR) (Ipomoea nil (Japanese morning glory)).